The sequence spans 334 residues: Ferredoxin--NADP reductase (334 aa).

FAD contacts are provided by aspartate 33, glutamine 41, tyrosine 46, alanine 86, phenylalanine 120, aspartate 286, and threonine 327.

It belongs to the ferredoxin--NADP reductase type 2 family. As to quaternary structure, homodimer. FAD is required as a cofactor.

The enzyme catalyses 2 reduced [2Fe-2S]-[ferredoxin] + NADP(+) + H(+) = 2 oxidized [2Fe-2S]-[ferredoxin] + NADPH. In Rickettsia massiliae (strain Mtu5), this protein is Ferredoxin--NADP reductase.